The chain runs to 445 residues: Mutanase Pc12g07500 (445 aa).

Residues 1 to 21 (MIWKSLFSALAILTHILPALT) form the signal peptide. N-linked (GlcNAc...) asparagine glycans are attached at residues Asn386 and Asn437.

The protein belongs to the glycosyl hydrolase 71 family. Monomer.

Its subcellular location is the secreted. It catalyses the reaction Endohydrolysis of (1-&gt;3)-alpha-D-glucosidic linkages in isolichenin, pseudonigeran and nigeran.. Functionally, hydrolyzes 1,3-alpha-glucan predominantly into pentasaccharides. May enhance the efficacy of fungal antibiotics by degrading bacterial exopolysaccharides. This chain is Mutanase Pc12g07500, found in Penicillium rubens (strain ATCC 28089 / DSM 1075 / NRRL 1951 / Wisconsin 54-1255) (Penicillium chrysogenum).